Consider the following 292-residue polypeptide: Phosphatidylserine decarboxylase proenzyme (292 aa).

Catalysis depends on charge relay system; for autoendoproteolytic cleavage activity residues Asp-92, His-149, and Ser-255. The active-site Schiff-base intermediate with substrate; via pyruvic acid; for decarboxylase activity is the Ser-255. Ser-255 carries the pyruvic acid (Ser); by autocatalysis modification.

Belongs to the phosphatidylserine decarboxylase family. PSD-B subfamily. Prokaryotic type I sub-subfamily. Heterodimer of a large membrane-associated beta subunit and a small pyruvoyl-containing alpha subunit. The cofactor is pyruvate. In terms of processing, is synthesized initially as an inactive proenzyme. Formation of the active enzyme involves a self-maturation process in which the active site pyruvoyl group is generated from an internal serine residue via an autocatalytic post-translational modification. Two non-identical subunits are generated from the proenzyme in this reaction, and the pyruvate is formed at the N-terminus of the alpha chain, which is derived from the carboxyl end of the proenzyme. The autoendoproteolytic cleavage occurs by a canonical serine protease mechanism, in which the side chain hydroxyl group of the serine supplies its oxygen atom to form the C-terminus of the beta chain, while the remainder of the serine residue undergoes an oxidative deamination to produce ammonia and the pyruvoyl prosthetic group on the alpha chain. During this reaction, the Ser that is part of the protease active site of the proenzyme becomes the pyruvoyl prosthetic group, which constitutes an essential element of the active site of the mature decarboxylase.

The protein localises to the cell membrane. It carries out the reaction a 1,2-diacyl-sn-glycero-3-phospho-L-serine + H(+) = a 1,2-diacyl-sn-glycero-3-phosphoethanolamine + CO2. The protein operates within phospholipid metabolism; phosphatidylethanolamine biosynthesis; phosphatidylethanolamine from CDP-diacylglycerol: step 2/2. Catalyzes the formation of phosphatidylethanolamine (PtdEtn) from phosphatidylserine (PtdSer). This chain is Phosphatidylserine decarboxylase proenzyme, found in Idiomarina loihiensis (strain ATCC BAA-735 / DSM 15497 / L2-TR).